We begin with the raw amino-acid sequence, 775 residues long: ATP-dependent 6-phosphofructokinase 2 (775 aa).

The tract at residues methionine 1 to threonine 390 is N-terminal catalytic PFK domain 1. ATP is bound by residues glycine 25, arginine 88–cysteine 89, and glycine 118–serine 121. Aspartate 119 provides a ligand contact to Mg(2+). Substrate contacts are provided by residues serine 164–aspartate 166, arginine 201, methionine 208–arginine 210, glutamate 264, arginine 292, and histidine 298–arginine 301. Aspartate 166 (proton acceptor) is an active-site residue. An interdomain linker region spans residues serine 391 to methionine 404. A C-terminal regulatory PFK domain 2 region spans residues arginine 405–asparagine 775. Residues serine 537–asparagine 541, glutamine 582–alanine 584, aspartate 640, and histidine 672–glutamine 675 each bind beta-D-fructose 2,6-bisphosphate.

The protein belongs to the phosphofructokinase type A (PFKA) family. ATP-dependent PFK group I subfamily. Eukaryotic two domain clade 'E' sub-subfamily. As to quaternary structure, homotetramer. Mg(2+) is required as a cofactor.

The protein resides in the cytoplasm. The catalysed reaction is beta-D-fructose 6-phosphate + ATP = beta-D-fructose 1,6-bisphosphate + ADP + H(+). The protein operates within carbohydrate degradation; glycolysis; D-glyceraldehyde 3-phosphate and glycerone phosphate from D-glucose: step 3/4. With respect to regulation, allosterically activated by ADP, AMP, or fructose 2,6-bisphosphate, and allosterically inhibited by ATP or citrate. In terms of biological role, catalyzes the phosphorylation of D-fructose 6-phosphate to fructose 1,6-bisphosphate by ATP, the first committing step of glycolysis. This Aspergillus oryzae (strain ATCC 42149 / RIB 40) (Yellow koji mold) protein is ATP-dependent 6-phosphofructokinase 2 (pfkB).